The sequence spans 181 residues: Endoribonuclease YbeY (181 aa).

Positions 115, 119, and 125 each coordinate Zn(2+).

The protein belongs to the endoribonuclease YbeY family. Zn(2+) serves as cofactor.

The protein resides in the cytoplasm. Its function is as follows. Single strand-specific metallo-endoribonuclease involved in late-stage 70S ribosome quality control and in maturation of the 3' terminus of the 16S rRNA. This Bifidobacterium adolescentis (strain ATCC 15703 / DSM 20083 / NCTC 11814 / E194a) protein is Endoribonuclease YbeY.